Here is a 196-residue protein sequence, read N- to C-terminus: uncharacterized protein (196 aa).

To H.influenzae HI_0431.

This is an uncharacterized protein from Salmonella typhi.